Consider the following 317-residue polypeptide: Apolipoprotein E (317 aa).

Positions 1-18 (MKVLWAALLVTFLAGCQA) are cleaved as a signal peptide. 8 consecutive repeat copies span residues 80-101 (TLMD…EQLS), 102-123 (PVAE…ARLG), 124-145 (ADME…AMLG), 146-167 (QSTE…KRLL), 168-189 (RDAD…EGAE), 190-211 (RGVS…VRAA), 212-233 (TVGS…ERLR), and 234-255 (ARME…EQVA). The interval 80–255 (TLMDETMKEL…RLDEVKEQVA (176 aa)) is 8 X 22 AA approximate tandem repeats. A Methionine sulfoxide modification is found at M143. At S147 the chain carries Phosphoserine. Positions 158 to 168 (HLRKLRKRLLR) are LDL and other lipoprotein receptors binding. 162–165 (LRKR) is a heparin binding site. The tract at residues 210–290 (AATVGSLASQ…SWFEPLVEDM (81 aa)) is lipid-binding and lipoprotein association. 229–236 (GERLRARM) contributes to the heparin binding site. Residues 266-317 (QQISLQAEAFQARLKSWFEPLVEDMQRQWAGLVEKVQAAVGASTAPVPSDNH) form a homooligomerization region. Positions 278–290 (RLKSWFEPLVEDM) are specificity for association with VLDL.

This sequence belongs to the apolipoprotein A1/A4/E family. As to quaternary structure, homotetramer. May interact with ABCA1; functionally associated with ABCA1 in the biogenesis of HDLs. May interact with APP/A4 amyloid-beta peptide; the interaction is extremely stable in vitro but its physiological significance is unclear. May interact with MAPT. May interact with MAP2. In the cerebrospinal fluid, interacts with secreted SORL1. Interacts with PMEL; this allows the loading of PMEL luminal fragment on ILVs to induce fibril nucleation. APOE exists as multiple glycosylated and sialylated glycoforms within cells and in plasma. The extent of glycosylation and sialylation are tissue and context specific. In terms of processing, glycated in plasma VLDL. Post-translationally, phosphorylated by FAM20C in the extracellular medium.

It localises to the secreted. It is found in the extracellular space. The protein resides in the extracellular matrix. The protein localises to the extracellular vesicle. Its subcellular location is the endosome. It localises to the multivesicular body. APOE is an apolipoprotein, a protein associating with lipid particles, that mainly functions in lipoprotein-mediated lipid transport between organs via the plasma and interstitial fluids. APOE is a core component of plasma lipoproteins and is involved in their production, conversion and clearance. Apolipoproteins are amphipathic molecules that interact both with lipids of the lipoprotein particle core and the aqueous environment of the plasma. As such, APOE associates with chylomicrons, chylomicron remnants, very low density lipoproteins (VLDL) and intermediate density lipoproteins (IDL) but shows a preferential binding to high-density lipoproteins (HDL). It also binds a wide range of cellular receptors including the LDL receptor/LDLR, the LDL receptor-related proteins LRP1, LRP2 and LRP8 and the very low-density lipoprotein receptor/VLDLR that mediate the cellular uptake of the APOE-containing lipoprotein particles. Finally, APOE also has a heparin-binding activity and binds heparan-sulfate proteoglycans on the surface of cells, a property that supports the capture and the receptor-mediated uptake of APOE-containing lipoproteins by cells. A main function of APOE is to mediate lipoprotein clearance through the uptake of chylomicrons, VLDLs, and HDLs by hepatocytes. APOE is also involved in the biosynthesis by the liver of VLDLs as well as their uptake by peripheral tissues ensuring the delivery of triglycerides and energy storage in muscle, heart and adipose tissues. By participating in the lipoprotein-mediated distribution of lipids among tissues, APOE plays a critical role in plasma and tissues lipid homeostasis. APOE is also involved in two steps of reverse cholesterol transport, the HDLs-mediated transport of cholesterol from peripheral tissues to the liver, and thereby plays an important role in cholesterol homeostasis. First, it is functionally associated with ABCA1 in the biogenesis of HDLs in tissues. Second, it is enriched in circulating HDLs and mediates their uptake by hepatocytes. APOE also plays an important role in lipid transport in the central nervous system, regulating neuron survival and sprouting. This Papio anubis (Olive baboon) protein is Apolipoprotein E (APOE).